The sequence spans 137 residues: Large ribosomal subunit protein uL16c (137 aa).

Belongs to the universal ribosomal protein uL16 family. In terms of assembly, part of the 50S ribosomal subunit.

It is found in the plastid. Its subcellular location is the chloroplast. This is Large ribosomal subunit protein uL16c from Thalassiosira pseudonana (Marine diatom).